The chain runs to 424 residues: Adenylosuccinate synthetase 2 (424 aa).

GTP contacts are provided by residues G11–K17 and G39–T41. The Proton acceptor role is filled by D12. Positions 12 and 39 each coordinate Mg(2+). IMP contacts are provided by residues D12–K15, N37–H40, T127, R141, Q223, T238, and R302. The Proton donor role is filled by H40. T298–R304 contributes to the substrate binding site. GTP is bound by residues R304, K330 to D332, and S412 to G414.

Belongs to the adenylosuccinate synthetase family. As to quaternary structure, homodimer. The cofactor is Mg(2+).

The protein localises to the cytoplasm. The catalysed reaction is IMP + L-aspartate + GTP = N(6)-(1,2-dicarboxyethyl)-AMP + GDP + phosphate + 2 H(+). Its pathway is purine metabolism; AMP biosynthesis via de novo pathway; AMP from IMP: step 1/2. Plays an important role in the de novo pathway of purine nucleotide biosynthesis. Catalyzes the first committed step in the biosynthesis of AMP from IMP. This chain is Adenylosuccinate synthetase 2, found in Methanosarcina acetivorans (strain ATCC 35395 / DSM 2834 / JCM 12185 / C2A).